The following is a 418-amino-acid chain: Deoxyribonuclease Tat-D (418 aa).

4 residues coordinate a divalent metal cation: E185, H226, H277, and D327.

Belongs to the metallo-dependent hydrolases superfamily. TatD-type hydrolase family. Mg(2+) serves as cofactor.

The protein localises to the cytoplasm. In terms of biological role, has both endo- and exonuclease activities. Incises double-stranded DNA without obvious specificity via its endonuclease activity and excises the DNA from the 3'-to 5'-end by its exonuclease activity. May have a role in apoptosis. In Saccharomyces cerevisiae (strain ATCC 204508 / S288c) (Baker's yeast), this protein is Deoxyribonuclease Tat-D.